We begin with the raw amino-acid sequence, 1253 residues long: Structural polyprotein (1253 aa).

The host transcription inhibition stretch occupies residues 43–77; that stretch reads VQAQQMQQLISAVSALTTKQNGKAPKKPKKKPQKA. The disordered stretch occupies residues 58 to 110; it reads LTTKQNGKAPKKPKKKPQKAKAKKNEQQKKNENKKPPPKQKNPAKKKKPGKRE. Residues 66 to 79 show a composition bias toward basic residues; sequence APKKPKKKPQKAKA. Positions 70–106 match the Nuclear localization signal motif; that stretch reads PKKKPQKAKAKKNEQQKKNENKKPPPKQKNPAKKKKP. Residues 80 to 92 show a composition bias toward basic and acidic residues; that stretch reads KKNEQQKKNENKK. The binding to the viral RNA stretch occupies residues 90-121; it reads NKKPPPKQKNPAKKKKPGKRERMCMKIENDCI. Basic residues predominate over residues 93–108; that stretch reads PPPKQKNPAKKKKPGK. The tract at residues 106–120 is ribosome-binding; that stretch reads PGKRERMCMKIENDC. Cys-120 and Cys-135 are joined by a disulfide. The Peptidase S3 domain occupies 120–268; the sequence is CIFEVKLDGK…RYTPEGTEEW (149 aa). The Charge relay system role is filled by His-146. Residues 151-161 carry the Nuclear export signal motif; the sequence is IDNPDLAKLTY. The interval 162 to 167 is interaction with spike glycoprotein E2; sequence KKSSKY. The active-site Charge relay system is the Asp-168. Residues 190 to 200 are dimerization of the capsid protein; it reads PEGHYNWHHGA. The active-site Charge relay system is Ser-220. The dimerization of the capsid protein stretch occupies residues 226–230; the sequence is DNKGR. The tract at residues 269–280 is functions as an uncleaved signal peptide for the precursor of protein E3/E2; sequence SAALMMCVLANV. Cystine bridges form between Cys-275-Cys-284, Cys-289-Cys-293, and Cys-292-Cys-324. N-linked (GlcNAc...) asparagine; by host glycosylation occurs at Asn-279. A glycan (N-linked (GlcNAc...) asparagine; by host) is linked at Asn-325. Topologically, residues 333 to 694 are extracellular; that stretch reads SVTKHFNVYK…EIILYYYGLY (362 aa). Disulfide bonds link Cys-351–Cys-457, Cys-354–Cys-360, Cys-423–Cys-437, Cys-485–Cys-597, Cys-533–Cys-557, and Cys-535–Cys-552. Interaction with host Mxra8 receptor regions lie at residues 358 to 361 and 394 to 396; these read QFCY and HEH. The segment at 516–519 is interaction with host Mxra8 receptor; it reads QSGN. Asn-532 carries an N-linked (GlcNAc...) asparagine; by host glycan. Residues 548 to 554 are interaction with host Mxra8 receptor; the sequence is TINSCKI. Asn-594 carries N-linked (GlcNAc...) asparagine; by host glycosylation. The helical transmembrane segment at 695–715 threads the bilayer; sequence PAATIAAVSAAGLAVVLSLLA. The Cytoplasmic portion of the chain corresponds to 716–754; it reads SCYMFATARRKCLTPYALTPGAVVPVTLGVLCCAPRAHA. Cys-717 is lipidated: S-stearoyl cysteine; by host. The interaction with the capsid protein stretch occupies residues 722 to 726; the sequence is TARRK. Cys-727 is lipidated: S-stearoyl cysteine; by host. A transient transmembrane before p62-6K protein processing region spans residues 727-747; the sequence is CLTPYALTPGAVVPVTLGVLC. A disulfide bridge links Cys-727 with Cys-748. S-palmitoyl cysteine; by host attachment occurs at residues Cys-747 and Cys-748. The Extracellular portion of the chain corresponds to 755-769; it reads ASFAESMAYLWDENQ. N-linked (GlcNAc...) asparagine; by host glycosylation occurs at Asn-768. A helical membrane pass occupies residues 770-790; sequence TLFWLELATPLAAIIILVCCL. Residues 791–792 lie on the Cytoplasmic side of the membrane; that stretch reads KN. Residues 793 to 813 traverse the membrane as a helical segment; sequence LLCCCKPLSFLVLVSLGTPVV. 2 consecutive stretches face the extracellular side: residues 814–815 and 826–1227; these read KS and VGFP…WVQR. 4 disulfide bridges follow: Cys-864–Cys-929, Cys-877–Cys-909, Cys-878–Cys-911, and Cys-883–Cys-893. Positions 899 to 916 are E1 fusion peptide loop; that stretch reads VYPFMWGGAYCFCDTENT. 2 N-linked (GlcNAc...) asparagine; by host glycosylation sites follow: Asn-956 and Asn-1085. Disulfide bonds link Cys-1074-Cys-1086, Cys-1116-Cys-1191, Cys-1121-Cys-1195, and Cys-1143-Cys-1185. The chain crosses the membrane as a helical span at residues 1228–1248; sequence VAGGLGGLTLAAVAVLILVTC. Cys-1248 carries the S-palmitoyl cysteine; by host lipid modification. The Cytoplasmic portion of the chain corresponds to 1249-1253; that stretch reads VTMRR.

In terms of assembly, homodimer. Homomultimer. Interacts with host karyopherin KPNA4; this interaction allows the nuclear import of the viral capsid protein. Interacts with spike glycoprotein E2. Interacts with host IRAK1; the interaction leads to inhibition of IRAK1-dependent signaling. As to quaternary structure, the precursor of protein E3/E2 and E1 form a heterodimer shortly after synthesis. Interacts with spike glycoprotein E2. The precursor of protein E3/E2 and E1 form a heterodimer shortly after synthesis. Processing of the precursor of protein E3/E2 into E2 and E3 results in a heterodimer of the spike glycoproteins E2 and E1. Spike at virion surface are constituted of a trimer of E2-E1 heterodimers. After target cell attachment and endocytosis, E1 change conformation to form homotrimers. Interacts with 6K protein. E1/E2 heterodimer interacts with host LDLR. In terms of assembly, interacts with spike glycoprotein E1. Processing of the precursor of protein E3/E2 into E2 and E3 results in a heterodimer of the spike glycoproteins E2 and E1. Spike at virion surface are constituted of a trimer of E2-E1 heterodimers. Interacts with 6K protein. Interacts with host MXRA8; this interaction mediates virus entry. As to quaternary structure, oligomer. Interacts with spike glycoprotein E1. Interacts with spike glycoprotein E2. Post-translationally, structural polyprotein: Specific enzymatic cleavages in vivo yield mature proteins. Capsid protein is auto-cleaved during polyprotein translation, unmasking a signal peptide at the N-terminus of the precursor of E3/E2. The remaining polyprotein is then targeted to the host endoplasmic reticulum, where host signal peptidase cleaves it into pE2, 6K and E1 proteins. pE2 is further processed to mature E3 and E2 by host furin in trans-Golgi vesicle. Palmitoylated via thioester bonds. These palmitoylations may induce disruption of the C-terminus transmembrane. This would result in the reorientation of E2 C-terminus from lumenal to cytoplasmic side. In terms of processing, N-glycosylated. Post-translationally, palmitoylated via thioester bonds.

The protein resides in the virion. It localises to the host cytoplasm. Its subcellular location is the host cell membrane. The protein localises to the host nucleus. It is found in the virion membrane. The protein resides in the host Golgi apparatus. It localises to the host trans-Golgi network. Its subcellular location is the host endoplasmic reticulum. The enzyme catalyses Autocatalytic release of the core protein from the N-terminus of the togavirus structural polyprotein by hydrolysis of a -Trp-|-Ser- bond.. Functionally, forms an icosahedral capsid with a T=4 symmetry composed of 240 copies of the capsid protein surrounded by a lipid membrane through which penetrate 80 spikes composed of trimers of E1-E2 heterodimers. The capsid protein binds to the viral RNA genome at a site adjacent to a ribosome binding site for viral genome translation following genome release. Possesses a protease activity that results in its autocatalytic cleavage from the nascent structural protein. Following its self-cleavage, the capsid protein transiently associates with ribosomes, and within several minutes the protein binds to viral RNA and rapidly assembles into icosahedric core particles. The resulting nucleocapsid eventually associates with the cytoplasmic domain of the spike glycoprotein E2 at the cell membrane, leading to budding and formation of mature virions. In case of infection, new virions attach to target cells and after clathrin-mediated endocytosis their membrane fuses with the host endosomal membrane. This leads to the release of the nucleocapsid into the cytoplasm, followed by an uncoating event necessary for the genomic RNA to become accessible. The uncoating might be triggered by the interaction of capsid proteins with ribosomes. Binding of ribosomes would release the genomic RNA since the same region is genomic RNA-binding and ribosome-binding. Specifically inhibits interleukin-1 receptor-associated kinase 1/IRAK1-dependent signaling during viral entry, representing a means by which the alphaviruses may evade innate immune detection and activation prior to viral gene expression. Provides the signal sequence for the translocation of the precursor of protein E3/E2 to the host endoplasmic reticulum. Furin-cleaved E3 remains associated with spike glycoprotein E1 and mediates pH protection of the latter during the transport via the secretory pathway. After virion release from the host cell, the assembly protein E3 is gradually released in the extracellular space. In terms of biological role, plays a role in viral attachment to target host cell, by binding to the cell receptor MXRA8. The host LDLR may also act as a cell receptor for viral entry. Synthesized as a p62 precursor which is processed by furin at the cell membrane just before virion budding, giving rise to E2-E1 heterodimer. The p62-E1 heterodimer is stable, whereas E2-E1 is unstable and dissociate at low pH. p62 is processed at the last step, presumably to avoid E1 fusion activation before its final export to cell surface. E2 C-terminus contains a transitory transmembrane that would be disrupted by palmitoylation, resulting in reorientation of the C-terminal tail from lumenal to cytoplasmic side. This step is critical since E2 C-terminus is involved in budding by interacting with capsid proteins. This release of E2 C-terminus in cytoplasm occurs lately in protein export, and precludes premature assembly of particles at the endoplasmic reticulum membrane. Its function is as follows. Acts as a viroporin that participates in virus glycoprotein processing and transport to the plasma membrane, cell permeabilization and budding of viral particles. Disrupts the calcium homeostasis of the cell, probably at the endoplasmic reticulum level. This leads to cytoplasmic calcium elevation. Because of its lipophilic properties, the 6K protein is postulated to influence the selection of lipids that interact with the transmembrane domains of the glycoproteins, which, in turn, affects the deformability of the bilayer required for the extreme curvature that occurs as budding proceeds. Present in low amount in virions, about 3% compared to viral glycoproteins. Functionally, class II viral fusion protein. Fusion activity is inactive as long as E1 is bound to E2 in mature virion. After virus attachment to target cell via host MXRA8 and endocytosis, acidification of the endosome induce dissociation of E1/E2 heterodimer and concomitant trimerization of the E1 subunits. This E1 trimer is fusion active, and promotes release of viral nucleocapsid in cytoplasm after endosome and viral membrane fusion. Efficient fusion requires the presence of cholesterol and sphingolipid in the target membrane. This Aedes vexans (Inland floodwater mosquito) protein is Structural polyprotein.